We begin with the raw amino-acid sequence, 485 residues long: Adenosylhomocysteinase 1 (485 aa).

Positions 64, 139, and 205 each coordinate substrate. Position 206-208 (206-208) interacts with NAD(+); that stretch reads TTT. Lys-235 and Asp-239 together coordinate substrate. NAD(+)-binding positions include 271–276, Glu-292, 348–350, Asn-397, His-404, Lys-479, 479–483, and Tyr-483; these read GDVGKG, IGH, and KPPHY.

Belongs to the adenosylhomocysteinase family. In terms of assembly, homotetramer. NAD(+) is required as a cofactor.

It catalyses the reaction S-adenosyl-L-homocysteine + H2O = L-homocysteine + adenosine. The protein operates within amino-acid biosynthesis; L-homocysteine biosynthesis; L-homocysteine from S-adenosyl-L-homocysteine: step 1/1. Functionally, essential protein during embryogenesis. Adenosylhomocysteine is a competitive inhibitor of S-adenosyl-L-methionine-dependent methyl transferase reactions; therefore adenosylhomocysteinase may play a key role in the control of methylations via regulation of the intracellular concentration of adenosylhomocysteine. Required for DNA methylation-dependent gene silencing. This is Adenosylhomocysteinase 1 from Arabidopsis thaliana (Mouse-ear cress).